The sequence spans 152 residues: Large ribosomal subunit protein bL9 (152 aa).

Belongs to the bacterial ribosomal protein bL9 family.

Binds to the 23S rRNA. The polypeptide is Large ribosomal subunit protein bL9 (Prochlorococcus marinus (strain MIT 9313)).